We begin with the raw amino-acid sequence, 329 residues long: Serpentine receptor class alpha-8 (329 aa).

The next 6 membrane-spanning stretches (helical) occupy residues 26-46 (VDLITSFFTYMLSIIAIKMVL), 60-80 (FLNIFYANLYQIVYSIDVVVI), 141-161 (IFVGSFIAIVVMISTTSTGKL), 187-207 (TIHFYISTVVSLFNLAASVAL), 231-251 (VIESTETICFLNFTQFVFMFI), and 273-293 (FWVVWCYTVPFIALTFPLLLI).

It belongs to the nematode receptor-like protein sra family.

It is found in the membrane. The protein is Serpentine receptor class alpha-8 (sra-8) of Caenorhabditis elegans.